The primary structure comprises 218 residues: MTQATNQTPGQDVPGAADVPAAAEGQGQGQGERRGGGGGRGGDRRGRGDRRGRGRDERDSEWQERVIQIRRVSKTVKGGKKMSFRAIVVVGNEKGQVGVGVGKAGDVIGAVKKGVADGKKHLVKVPLTRSNSIPTISTGRDGAASVLMRPAAPGTGVIAGGSIRTVLELAGIKNVLAKRLGSKTPLNNARAAMVALRDLRTHQDTAKERGITLEQIYS.

Residues 1–10 are compositionally biased toward polar residues; the sequence is MTQATNQTPG. The tract at residues 1–63 is disordered; that stretch reads MTQATNQTPG…GRDERDSEWQ (63 aa). Residues 11–25 show a composition bias toward low complexity; that stretch reads QDVPGAADVPAAAEG. Residues 31-63 are compositionally biased toward basic and acidic residues; that stretch reads GERRGGGGGRGGDRRGRGDRRGRGRDERDSEWQ. Positions 62 to 125 constitute an S5 DRBM domain; sequence WQERVIQIRR…ADGKKHLVKV (64 aa).

It belongs to the universal ribosomal protein uS5 family. In terms of assembly, part of the 30S ribosomal subunit. Contacts proteins S4 and S8.

Functionally, with S4 and S12 plays an important role in translational accuracy. In terms of biological role, located at the back of the 30S subunit body where it stabilizes the conformation of the head with respect to the body. The chain is Small ribosomal subunit protein uS5 from Synechococcus sp. (strain RCC307).